We begin with the raw amino-acid sequence, 239 residues long: Phosphoribosylaminoimidazole-succinocarboxamide synthase (239 aa).

It belongs to the SAICAR synthetase family.

The enzyme catalyses 5-amino-1-(5-phospho-D-ribosyl)imidazole-4-carboxylate + L-aspartate + ATP = (2S)-2-[5-amino-1-(5-phospho-beta-D-ribosyl)imidazole-4-carboxamido]succinate + ADP + phosphate + 2 H(+). It participates in purine metabolism; IMP biosynthesis via de novo pathway; 5-amino-1-(5-phospho-D-ribosyl)imidazole-4-carboxamide from 5-amino-1-(5-phospho-D-ribosyl)imidazole-4-carboxylate: step 1/2. This chain is Phosphoribosylaminoimidazole-succinocarboxamide synthase, found in Bacillus cereus (strain AH187).